A 919-amino-acid polypeptide reads, in one-letter code: Probable glucan 1,3-alpha-glucosidase (919 aa).

An N-terminal signal peptide occupies residues 1–28 (MDPPPRPRPHRVAVLLLLLLASSPAARA). The active-site Nucleophile is aspartate 510. The active site involves glutamate 513. Residue aspartate 586 is the Proton donor of the active site. Asparagine 802 is a glycosylation site (N-linked (GlcNAc...) asparagine).

It belongs to the glycosyl hydrolase 31 family. In terms of assembly, heterodimer of a catalytic alpha subunit and a beta subunit.

The protein resides in the endoplasmic reticulum. It carries out the reaction N(4)-(alpha-D-Glc-(1-&gt;3)-alpha-D-Man-(1-&gt;2)-alpha-D-Man-(1-&gt;2)-alpha-D-Man-(1-&gt;3)-[alpha-D-Man-(1-&gt;2)-alpha-D-Man-(1-&gt;3)-[alpha-D-Man-(1-&gt;2)-alpha-D-Man-(1-&gt;6)]-alpha-D-Man-(1-&gt;6)]-beta-D-Man-(1-&gt;4)-beta-D-GlcNAc-(1-&gt;4)-beta-D-GlcNAc)-L-asparaginyl-[protein] + H2O = N(4)-(alpha-D-Man-(1-&gt;2)-alpha-D-Man-(1-&gt;2)-alpha-D-Man-(1-&gt;3)-[alpha-D-Man-(1-&gt;2)-alpha-D-Man-(1-&gt;3)-[alpha-D-Man-(1-&gt;2)-alpha-D-Man-(1-&gt;6)]-alpha-D-Man-(1-&gt;6)]-beta-D-Man-(1-&gt;4)-beta-D-GlcNAc-(1-&gt;4)-beta-D-GlcNAc)-L-asparaginyl-[protein] (N-glucan mannose isomer 9A1,2,3B1,2,3) + beta-D-glucose. The enzyme catalyses N(4)-(alpha-D-Glc-(1-&gt;3)-alpha-D-Glc-(1-&gt;3)-alpha-D-Man-(1-&gt;2)-alpha-D-Man-(1-&gt;2)-alpha-D-Man-(1-&gt;3)-[alpha-D-Man-(1-&gt;2)-alpha-D-Man-(1-&gt;3)-[alpha-D-Man-(1-&gt;2)-alpha-D-Man-(1-&gt;6)]-alpha-D-Man-(1-&gt;6)]-beta-D-Man-(1-&gt;4)-beta-D-GlcNAc-(1-&gt;4)-beta-D-GlcNAc)-L-asparaginyl-[protein] + H2O = N(4)-(alpha-D-Glc-(1-&gt;3)-alpha-D-Man-(1-&gt;2)-alpha-D-Man-(1-&gt;2)-alpha-D-Man-(1-&gt;3)-[alpha-D-Man-(1-&gt;2)-alpha-D-Man-(1-&gt;3)-[alpha-D-Man-(1-&gt;2)-alpha-D-Man-(1-&gt;6)]-alpha-D-Man-(1-&gt;6)]-beta-D-Man-(1-&gt;4)-beta-D-GlcNAc-(1-&gt;4)-beta-D-GlcNAc)-L-asparaginyl-[protein] + beta-D-glucose. Its pathway is glycan metabolism; N-glycan metabolism. Functionally, cleaves sequentially the 2 innermost alpha-1,3-linked glucose residues from the Glc(2)Man(9)GlcNAc(2) oligosaccharide precursor of immature glycoproteins. May be required for defense response elicited by pathogen-associated molecular patterns (PAMPs). This chain is Probable glucan 1,3-alpha-glucosidase, found in Oryza sativa subsp. japonica (Rice).